A 295-amino-acid polypeptide reads, in one-letter code: ATP synthase gamma chain (295 aa).

The protein belongs to the ATPase gamma chain family. In terms of assembly, F-type ATPases have 2 components, CF(1) - the catalytic core - and CF(0) - the membrane proton channel. CF(1) has five subunits: alpha(3), beta(3), gamma(1), delta(1), epsilon(1). CF(0) has three main subunits: a, b and c.

The protein localises to the cell inner membrane. In terms of biological role, produces ATP from ADP in the presence of a proton gradient across the membrane. The gamma chain is believed to be important in regulating ATPase activity and the flow of protons through the CF(0) complex. The polypeptide is ATP synthase gamma chain (Sulfurovum sp. (strain NBC37-1)).